The following is a 231-amino-acid chain: MDQQDHGQSGAMNYGTNPYQTNPMSTTAATVAGGAAQPGQLAFHQIHQQQQQQQLAQQLQAFWENQFKEIEKTTDFKNHSLPLARIKKIMKADEDVRMISAEAPVVFARACEMFILELTLRSWNHTEENKRRTLQKNDIAAAVTRTDIFDFLVDIVPREDLRDEVLGSIPRGTVPEAAAAGYPYGYLPAGTAPIGNPGMVMGNPGGAYPPNPYMGQPMWQQQAPDQPDQEN.

Positions 211–231 are disordered; sequence NPYMGQPMWQQQAPDQPDQEN.

Belongs to the NFYC/HAP5 subunit family. In terms of assembly, heterotrimeric transcription factor composed of three components, NF-YA, NF-YB and NF-YC. Interacts with NFYA2, NFYB2, CO and RGA. Interacts with REF6 (via N-terminus). Ubiquitous. Present in etiolated seedlings.

The protein localises to the nucleus. Its function is as follows. Stimulates the transcription of various genes by recognizing and binding to a CCAAT motif in promoters. Interacts with REF6 to directly regulate SOC1 transcription in response to flowering signals from photoperiod and gibberellic acid pathways. The polypeptide is Nuclear transcription factor Y subunit C-9 (NFYC9) (Arabidopsis thaliana (Mouse-ear cress)).